Reading from the N-terminus, the 562-residue chain is Protein wntless (562 aa).

At 1-13 (MSGTILENLSGRK) the chain is on the cytoplasmic side. The chain crosses the membrane as a helical span at residues 14–34 (LSILVASLLLCQVFCFLLGGL). At 35-239 (YAPLPAGHVT…AIHQNGGFTQ (205 aa)) the chain is on the lumenal side. Asparagine 58 carries N-linked (GlcNAc...) asparagine glycosylation. Residues 240–260 (IWLMLKTVLFPFVVGIMIWFW) form a helical membrane-spanning segment. The Cytoplasmic portion of the chain corresponds to 261–270 (RRVHLLQRSP). A helical membrane pass occupies residues 271–291 (ALLEYMLIYLGGALTFLNLPL). Residues 292–311 (EYLSLVVEMPYMLLLSDIRQ) lie on the Lumenal side of the membrane. Residues 312–332 (GIFYAMLLSFWLVFAGEHMLI) traverse the membrane as a helical segment. At 333–344 (QDAPNKSTIRSR) the chain is on the cytoplasmic side. The helical transmembrane segment at 345–365 (YWKHLSAVVVGCISLFVFDIC) threads the bilayer. The Lumenal portion of the chain corresponds to 366–390 (ERGVQLRNPFYSIWTTPLGAKVAMT). A helical transmembrane segment spans residues 391–411 (FIILAGVSAAIYFLFLCYMIW). The Cytoplasmic portion of the chain corresponds to 412 to 441 (KVFRNIGDKRTSLPSMSQARRLHYEGLIYR). Residues 442 to 462 (FKFLMLATLLCAALTVAGFIM) traverse the membrane as a helical segment. The Lumenal segment spans residues 463-482 (GQMAEGQWQWNDNVEIQLTS). A helical membrane pass occupies residues 483–503 (AFLTGVYGMWNIYIFALLILY). Residues 504-562 (APSHKQWPTMHHSDETTQSNENIVASAASEEIEFSHLPSDSNPSEISSLTSFTRKVAFD) lie on the Cytoplasmic side of the membrane. The disordered stretch occupies residues 539–562 (HLPSDSNPSEISSLTSFTRKVAFD). The segment covering 541 to 556 (PSDSNPSEISSLTSFT) has biased composition (polar residues).

Belongs to the wntless family. As to quaternary structure, interacts with wg; in the Golgi. Interacts with Vps35, a component of the retromer complex; wls stability is regulated by Vps35.

Its subcellular location is the presynaptic cell membrane. The protein localises to the postsynaptic cell membrane. The protein resides in the cell membrane. It localises to the endoplasmic reticulum membrane. It is found in the endosome membrane. Its subcellular location is the golgi apparatus membrane. Its function is as follows. A segment polarity gene required for wingless (wg)-dependent patterning processes, acting in both wg-sending cells and wg-target cells. In non-neuronal cells wls directs wg secretion. The wls traffic loop encompasses the Golgi, the cell surface, an endocytic compartment and a retrograde route leading back to the Golgi, and involves clathrin-mediated endocytosis and the retromer complex (a conserved protein complex consisting of Vps35 and Vps26). In neuronal cells (the larval motorneuron NMJ), the wg signal moves across the synapse via the release of wls-containing exosome-like vesicles. Postsynaptic wls is required for the trafficking of fz2 through the fz2-interacting protein Grip. The polypeptide is Protein wntless (Drosophila ananassae (Fruit fly)).